A 191-amino-acid polypeptide reads, in one-letter code: 3-isopropylmalate dehydratase small subunit (191 aa).

It belongs to the LeuD family. LeuD type 1 subfamily. As to quaternary structure, heterodimer of LeuC and LeuD.

The catalysed reaction is (2R,3S)-3-isopropylmalate = (2S)-2-isopropylmalate. Its pathway is amino-acid biosynthesis; L-leucine biosynthesis; L-leucine from 3-methyl-2-oxobutanoate: step 2/4. In terms of biological role, catalyzes the isomerization between 2-isopropylmalate and 3-isopropylmalate, via the formation of 2-isopropylmaleate. The chain is 3-isopropylmalate dehydratase small subunit from Anaeromyxobacter sp. (strain K).